The following is a 173-amino-acid chain: Adenine phosphoribosyltransferase (173 aa).

It belongs to the purine/pyrimidine phosphoribosyltransferase family. In terms of assembly, homodimer.

It localises to the cytoplasm. It catalyses the reaction AMP + diphosphate = 5-phospho-alpha-D-ribose 1-diphosphate + adenine. The protein operates within purine metabolism; AMP biosynthesis via salvage pathway; AMP from adenine: step 1/1. Its function is as follows. Catalyzes a salvage reaction resulting in the formation of AMP, that is energically less costly than de novo synthesis. The polypeptide is Adenine phosphoribosyltransferase (Petrotoga mobilis (strain DSM 10674 / SJ95)).